Here is a 119-residue protein sequence, read N- to C-terminus: Large ribosomal subunit protein bL20 (119 aa).

It belongs to the bacterial ribosomal protein bL20 family.

Binds directly to 23S ribosomal RNA and is necessary for the in vitro assembly process of the 50S ribosomal subunit. It is not involved in the protein synthesizing functions of that subunit. This Albidiferax ferrireducens (strain ATCC BAA-621 / DSM 15236 / T118) (Rhodoferax ferrireducens) protein is Large ribosomal subunit protein bL20.